Here is a 167-residue protein sequence, read N- to C-terminus: Phosphopantetheine adenylyltransferase (167 aa).

Residue T9 participates in substrate binding. ATP-binding positions include 9–10 (TF) and H17. Residues K41, L73, and R87 each contribute to the substrate site. Residues 88-90 (GLR), E98, and 123-129 (YQFISGT) contribute to the ATP site.

This sequence belongs to the bacterial CoaD family. Homohexamer. The cofactor is Mg(2+).

Its subcellular location is the cytoplasm. It catalyses the reaction (R)-4'-phosphopantetheine + ATP + H(+) = 3'-dephospho-CoA + diphosphate. It participates in cofactor biosynthesis; coenzyme A biosynthesis; CoA from (R)-pantothenate: step 4/5. In terms of biological role, reversibly transfers an adenylyl group from ATP to 4'-phosphopantetheine, yielding dephospho-CoA (dPCoA) and pyrophosphate. The sequence is that of Phosphopantetheine adenylyltransferase from Ralstonia pickettii (strain 12J).